The sequence spans 780 residues: Myosin heavy chain kinase C (780 aa).

The region spanning 40-243 (IGDDLKPKWT…VCDFLKLKPI (204 aa)) is the Alpha-type protein kinase domain. The interval 310-495 (RIRAQQQQKS…MEQTPDRSEF (186 aa)) is disordered. Positions 337–350 (QQSPSSPTSKPVPQ) are enriched in low complexity. The segment covering 353–376 (KTPSQSNVVNKSPVSPPKENSNVK) has biased composition (polar residues). Low complexity predominate over residues 380–436 (DNINNNNSSISSNNDNSNNNNNNNDNINNSSNSSSVNSNSSSVSSSSSSSSSSSSSS). Polar residues predominate over residues 437–450 (TTNAAPISIQVSRN). Positions 458–488 (IQPSSAAASASSTSSSNVPTPESTSTSSMEQ) are enriched in low complexity. 6 WD repeats span residues 507 to 546 (DTVR…HVTN), 549 to 589 (AHGK…TIKE), 591 to 628 (KESN…CVKT), 631 to 668 (GHTR…ILTN), 671 to 708 (GHEG…CVNT), and 748 to 780 (NTRS…WDKM).

This sequence belongs to the protein kinase superfamily. Alpha-type protein kinase family. ALPK subfamily. As to quaternary structure, interacts with myosin II heavy chain (mhcA). Post-translationally, autophosphorylated in vitro.

Its subcellular location is the cytoplasm. The protein localises to the cell cortex. It localises to the membrane. It is found in the cleavage furrow. It carries out the reaction L-threonyl-[myosin heavy-chain] + ATP = O-phospho-L-threonyl-[myosin heavy-chain] + ADP + H(+). Its function is as follows. Phosphorylates threonine at 'Thr-1823', 'Thr-1833' and 'Thr-2029' in the C-terminal tail region of myosin II heavy chain (mhcA). This phosphorylation is critical in actin-activated ATPase activity of the myosin and regulating the assembly and disassembly of myosin II filament. In vitro, catalytic domain phosphorylates mhcA, myelin basic protein, myosin regulatory light chain, casein and caldesmon. Drives the disassembly of myosin II filaments for efficient cytokinesis and recycling of myosin II that occurs during late cytokinesis. Can be activated in vitro by autophosphorylation. This is Myosin heavy chain kinase C (mhkC) from Dictyostelium discoideum (Social amoeba).